The following is a 210-amino-acid chain: N-(5'-phosphoribosyl)anthranilate isomerase (210 aa).

The protein belongs to the TrpF family.

It carries out the reaction N-(5-phospho-beta-D-ribosyl)anthranilate = 1-(2-carboxyphenylamino)-1-deoxy-D-ribulose 5-phosphate. It functions in the pathway amino-acid biosynthesis; L-tryptophan biosynthesis; L-tryptophan from chorismate: step 3/5. The chain is N-(5'-phosphoribosyl)anthranilate isomerase from Staphylococcus aureus (strain bovine RF122 / ET3-1).